The primary structure comprises 35 residues: Cupiennin-2b (35 aa).

At Q35 the chain carries Glutamine amide.

In terms of tissue distribution, expressed by the venom gland.

It localises to the secreted. This is Cupiennin-2b from Cupiennius salei (American wandering spider).